Here is a 342-residue protein sequence, read N- to C-terminus: Tetraacyldisaccharide 4'-kinase (342 aa).

68–75 (TVGGTGKT) contributes to the ATP binding site.

Belongs to the LpxK family.

The catalysed reaction is a lipid A disaccharide + ATP = a lipid IVA + ADP + H(+). It participates in glycolipid biosynthesis; lipid IV(A) biosynthesis; lipid IV(A) from (3R)-3-hydroxytetradecanoyl-[acyl-carrier-protein] and UDP-N-acetyl-alpha-D-glucosamine: step 6/6. In terms of biological role, transfers the gamma-phosphate of ATP to the 4'-position of a tetraacyldisaccharide 1-phosphate intermediate (termed DS-1-P) to form tetraacyldisaccharide 1,4'-bis-phosphate (lipid IVA). The sequence is that of Tetraacyldisaccharide 4'-kinase from Burkholderia thailandensis (strain ATCC 700388 / DSM 13276 / CCUG 48851 / CIP 106301 / E264).